Consider the following 545-residue polypeptide: Cannabidiolic acid synthase-like 2 (545 aa).

Residues 1-28 (MKCSTFCFWYVCKIIFFFLSFNIQISIA) form the signal peptide. A disulfide bridge links Cys-37 with Cys-99. Residues Asn-45, Asn-65, Asn-89, and Asn-168 are each glycosylated (N-linked (GlcNAc...) asparagine). The 175-residue stretch at 77 to 251 (TTPKPLVITT…AAWKIRLVAV (175 aa)) folds into the FAD-binding PCMH-type domain. The segment at residues 114 to 176 (HDAEGMSYIS…ENLSFPAGYC (63 aa)) is a cross-link (6-(S-cysteinyl)-8alpha-(pros-histidyl)-FAD (His-Cys)). Position 292 (His-292) interacts with substrate. Asn-297, Asn-305, Asn-329, and Asn-361 each carry an N-linked (GlcNAc...) asparagine glycan. Tyr-417 is a substrate binding site. Asn-467 carries N-linked (GlcNAc...) asparagine glycosylation. The active-site Proton acceptor is the Tyr-484. The N-linked (GlcNAc...) asparagine glycan is linked to Asn-499.

The protein belongs to the oxygen-dependent FAD-linked oxidoreductase family. It depends on FAD as a cofactor. In terms of processing, the FAD cofactor is bound via a bicovalent 6-S-cysteinyl, 8alpha-N1-histidyl FAD linkage.

The protein localises to the secreted. In terms of biological role, has no cannabidiolic acid synthase activity. The protein is Cannabidiolic acid synthase-like 2 (CBDAS3) of Cannabis sativa (Hemp).